Reading from the N-terminus, the 172-residue chain is Adenine phosphoribosyltransferase (172 aa).

This sequence belongs to the purine/pyrimidine phosphoribosyltransferase family. As to quaternary structure, homodimer.

It is found in the cytoplasm. The catalysed reaction is AMP + diphosphate = 5-phospho-alpha-D-ribose 1-diphosphate + adenine. The protein operates within purine metabolism; AMP biosynthesis via salvage pathway; AMP from adenine: step 1/1. Catalyzes a salvage reaction resulting in the formation of AMP, that is energically less costly than de novo synthesis. In Levilactobacillus brevis (strain ATCC 367 / BCRC 12310 / CIP 105137 / JCM 1170 / LMG 11437 / NCIMB 947 / NCTC 947) (Lactobacillus brevis), this protein is Adenine phosphoribosyltransferase.